The chain runs to 434 residues: Histidinol dehydrogenase (434 aa).

Positions 260 and 263 each coordinate Zn(2+). Residues E330 and H331 each act as proton acceptor in the active site. H423 contributes to the Zn(2+) binding site.

Belongs to the histidinol dehydrogenase family. Requires Zn(2+) as cofactor.

The enzyme catalyses L-histidinol + 2 NAD(+) + H2O = L-histidine + 2 NADH + 3 H(+). It participates in amino-acid biosynthesis; L-histidine biosynthesis; L-histidine from 5-phospho-alpha-D-ribose 1-diphosphate: step 9/9. Its function is as follows. Catalyzes the sequential NAD-dependent oxidations of L-histidinol to L-histidinaldehyde and then to L-histidine. The polypeptide is Histidinol dehydrogenase (hisD) (Synechocystis sp. (strain ATCC 27184 / PCC 6803 / Kazusa)).